The following is a 174-amino-acid chain: Nucleoside diphosphate kinase (174 aa).

Residues K14, F62, R90, T96, and R107 each coordinate ATP. The active-site Pros-phosphohistidine intermediate is the H123.

This sequence belongs to the NDK family. Mg(2+) serves as cofactor.

It is found in the cytoplasm. The catalysed reaction is a 2'-deoxyribonucleoside 5'-diphosphate + ATP = a 2'-deoxyribonucleoside 5'-triphosphate + ADP. The enzyme catalyses a ribonucleoside 5'-diphosphate + ATP = a ribonucleoside 5'-triphosphate + ADP. Its function is as follows. Major role in the synthesis of nucleoside triphosphates other than ATP. The ATP gamma phosphate is transferred to the NDP beta phosphate via a ping-pong mechanism, using a phosphorylated active-site intermediate. This chain is Nucleoside diphosphate kinase, found in Thermococcus kodakarensis (strain ATCC BAA-918 / JCM 12380 / KOD1) (Pyrococcus kodakaraensis (strain KOD1)).